The following is a 192-amino-acid chain: EF-hand protein 5 (192 aa).

Positions 1–36 (MKDKAPVSSQQDHFSRGGAVGGKPISDVRGTSRPFY) are disordered. EF-hand domains lie at 46-80 (AELA…GLHL), 81-118 (SDEE…EVDD), 119-154 (TMLE…GGEC), and 155-190 (STPE…HRLN). Residues Thr-100, Glu-102, Asp-107, Asp-132, and Thr-136 each contribute to the Ca(2+) site.

The protein is EF-hand protein 5 of Trypanosoma brucei brucei.